We begin with the raw amino-acid sequence, 78 residues long: MSRVCQVTSKRPAVGNNRSHALNATRRRFLPNLHTHRFWVESENRFVTLRLTAKGMRIIDKKGIDAVLAEIRARGEKI.

A disordered region spans residues 1 to 20 (MSRVCQVTSKRPAVGNNRSH).

Belongs to the bacterial ribosomal protein bL28 family.

The sequence is that of Large ribosomal subunit protein bL28 from Haemophilus ducreyi (strain 35000HP / ATCC 700724).